The chain runs to 184 residues: Probable RNA 2'-phosphotransferase (184 aa).

This sequence belongs to the KptA/TPT1 family.

Removes the 2'-phosphate from RNA via an intermediate in which the phosphate is ADP-ribosylated by NAD followed by a presumed transesterification to release the RNA and generate ADP-ribose 1''-2''-cyclic phosphate (APPR&gt;P). May function as an ADP-ribosylase. The protein is Probable RNA 2'-phosphotransferase of Escherichia coli O9:H4 (strain HS).